Reading from the N-terminus, the 135-residue chain is Large ribosomal subunit protein eL32 (135 aa).

The protein belongs to the eukaryotic ribosomal protein eL32 family.

This Methanococcus maripaludis (strain C6 / ATCC BAA-1332) protein is Large ribosomal subunit protein eL32.